A 401-amino-acid polypeptide reads, in one-letter code: Coenzyme A biosynthesis bifunctional protein CoaBC (401 aa).

Residues 1 to 190 (MQTLAGKKIL…FQPKPLQDKS (190 aa)) are phosphopantothenoylcysteine decarboxylase. Cysteine 159 (proton donor) is an active-site residue. Positions 191–401 (ILITAGPTRE…LKQIQTLMGH (211 aa)) are phosphopantothenate--cysteine ligase. CTP contacts are provided by residues aspartate 279, lysine 289, 307 to 310 (PDIV), phenylalanine 326, lysine 340, and lysine 344.

The protein in the N-terminal section; belongs to the HFCD (homo-oligomeric flavin containing Cys decarboxylase) superfamily. This sequence in the C-terminal section; belongs to the PPC synthetase family. Mg(2+) is required as a cofactor. The cofactor is FMN.

The enzyme catalyses N-[(R)-4-phosphopantothenoyl]-L-cysteine + H(+) = (R)-4'-phosphopantetheine + CO2. It carries out the reaction (R)-4'-phosphopantothenate + L-cysteine + CTP = N-[(R)-4-phosphopantothenoyl]-L-cysteine + CMP + diphosphate + H(+). It participates in cofactor biosynthesis; coenzyme A biosynthesis; CoA from (R)-pantothenate: step 2/5. It functions in the pathway cofactor biosynthesis; coenzyme A biosynthesis; CoA from (R)-pantothenate: step 3/5. Its function is as follows. Catalyzes two sequential steps in the biosynthesis of coenzyme A. In the first step cysteine is conjugated to 4'-phosphopantothenate to form 4-phosphopantothenoylcysteine. In the second step the latter compound is decarboxylated to form 4'-phosphopantotheine. This is Coenzyme A biosynthesis bifunctional protein CoaBC from Vibrio vulnificus (strain CMCP6).